The chain runs to 282 residues: Virginiamycin B lyase (282 aa).

Histidine 217 contacts substrate. Glutamate 256 contributes to the Mg(2+) binding site. Histidine 258 functions as the Proton acceptor in the catalytic mechanism. Glutamate 273 lines the Mg(2+) pocket.

It belongs to the Vgb family. As to quaternary structure, monomer. It depends on Mg(2+) as a cofactor.

In terms of biological role, inactivates the type B streptogramin antibiotics by linearizing the lactone ring at the ester linkage, generating a free phenylglycine carboxylate and converting the threonyl moiety into 2-amino-butenoic acid. This chain is Virginiamycin B lyase, found in Mycolicibacterium smegmatis (strain ATCC 700084 / mc(2)155) (Mycobacterium smegmatis).